Here is a 716-residue protein sequence, read N- to C-terminus: Zinc finger protein on ecdysone puffs (716 aa).

Disordered regions lie at residues 103-168 (PSLL…GGIR) and 182-208 (KNAN…ESPY). The segment covering 188–203 (KKKEPTPGEKKIESPT) has biased composition (basic and acidic residues). S201 bears the Phosphoserine mark. Phosphothreonine is present on T203. Position 206 is a phosphoserine (S206). The C2H2-type 1 zinc finger occupies 216 to 240 (FYCHLCKKHMWDANSFENHIKGRTH). The segment at 288–310 (DYCTMCDLNFHGHISTHRKSEGH) adopts a C2H2-type 2; atypical zinc-finger fold. The C2H2-type 3 zinc finger occupies 319-343 (PKCIECNKEFATRIDYDTHLLSAEH). The segment covering 350 to 359 (NNTKVGERKR) has biased composition (basic and acidic residues). The tract at residues 350–447 (NNTKVGERKR…EEEEVALPVD (98 aa)) is disordered. The short motif at 379–383 (KRKKK) is the Nuclear localization signal element. The span at 386–401 (KKEGEAADGEAKKEGA) shows a compositional bias: basic and acidic residues. The segment covering 405–414 (EGAEGDEAEG) has biased composition (acidic residues). The span at 415 to 431 (EEAKEGEEAADETKEGD) shows a compositional bias: basic and acidic residues. A compositionally biased stretch (acidic residues) spans 432-447 (ELNESQEEEEVALPVD). The C2H2-type 4 zinc finger occupies 489–513 (YECSVCSKFFDTEVTAEIHSRTATH). A disordered region spans residues 534-716 (RAAAALEENE…QRARGRYNRY (183 aa)). A compositionally biased stretch (basic and acidic residues) spans 541-551 (ENERKKRKVEE). A Nuclear localization signal motif is present at residues 544 to 548 (RKKRK). Acidic residues predominate over residues 560–638 (AAEETTEGAE…GQEGEQEPEP (79 aa)). Residues 639 to 656 (EPAPVQTPAPAEPAPPAK) show a composition bias toward pro residues. Positions 657–704 (TPAKTPTKAAAPAAVASPAAAATSADASPSPAKKATPARAAAGAKATP) are enriched in low complexity. Phosphoserine is present on residues S673, S684, and S686. Phosphothreonine is present on T692. Over residues 707-716 (QRARGRYNRY) the composition is skewed to basic residues.

It localises to the nucleus. The protein localises to the chromosome. In terms of biological role, may play a role in the process of early and late gene activation, or possibly in RNA processing, for a defined set of developmentally regulated loci. The protein is Zinc finger protein on ecdysone puffs (Pep) of Drosophila melanogaster (Fruit fly).